We begin with the raw amino-acid sequence, 426 residues long: 3-phosphoshikimate 1-carboxyvinyltransferase (426 aa).

3-phosphoshikimate contacts are provided by lysine 21, serine 22, and arginine 26. Lysine 21 provides a ligand contact to phosphoenolpyruvate. Residues glycine 92 and arginine 122 each coordinate phosphoenolpyruvate. 3-phosphoshikimate is bound by residues serine 167, serine 168, glutamine 169, serine 195, aspartate 315, and lysine 342. A phosphoenolpyruvate-binding site is contributed by glutamine 169. Residue aspartate 315 is the Proton acceptor of the active site. Phosphoenolpyruvate is bound by residues arginine 346 and arginine 386.

The protein belongs to the EPSP synthase family. As to quaternary structure, monomer.

The protein localises to the cytoplasm. It catalyses the reaction 3-phosphoshikimate + phosphoenolpyruvate = 5-O-(1-carboxyvinyl)-3-phosphoshikimate + phosphate. It participates in metabolic intermediate biosynthesis; chorismate biosynthesis. In terms of biological role, catalyzes the transfer of the enolpyruvyl moiety of phosphoenolpyruvate (PEP) to the 5-hydroxyl of shikimate-3-phosphate (S3P) to produce enolpyruvyl shikimate-3-phosphate and inorganic phosphate. The protein is 3-phosphoshikimate 1-carboxyvinyltransferase of Methanosphaera stadtmanae (strain ATCC 43021 / DSM 3091 / JCM 11832 / MCB-3).